A 303-amino-acid chain; its full sequence is N-acetyl-D-glucosamine kinase (303 aa).

ATP contacts are provided by residues 4–11 and 133–140; these read GFDIGGTK and GVGGGLIF. Positions 157, 177, 179, and 184 each coordinate Zn(2+).

The protein belongs to the ROK (NagC/XylR) family. NagK subfamily.

The enzyme catalyses N-acetyl-D-glucosamine + ATP = N-acetyl-D-glucosamine 6-phosphate + ADP + H(+). It functions in the pathway cell wall biogenesis; peptidoglycan recycling. Catalyzes the phosphorylation of N-acetyl-D-glucosamine (GlcNAc) derived from cell-wall degradation, yielding GlcNAc-6-P. In Escherichia coli O127:H6 (strain E2348/69 / EPEC), this protein is N-acetyl-D-glucosamine kinase.